A 750-amino-acid polypeptide reads, in one-letter code: Glutamate carboxypeptidase 2 (750 aa).

The Cytoplasmic segment spans residues Met1–Arg19. Position 10 is a phosphoserine (Ser10). The chain crosses the membrane as a helical; Signal-anchor for type II membrane protein span at residues Trp20–Ile43. Residues Lys44–Ala750 are Extracellular-facing. N-linked (GlcNAc...) asparagine glycosylation is found at Asn51, Asn76, Asn121, Asn140, Asn153, and Asn195. Substrate contacts are provided by Arg210 and Asn257. Ca(2+) contacts are provided by Thr269 and Tyr272. The tract at residues Ala274–Leu587 is NAALADase. The N-linked (GlcNAc...) asparagine glycan is linked to Asn336. 2 residues coordinate Zn(2+): His377 and Asp387. Residue Glu424 participates in substrate binding. Catalysis depends on Glu424, which acts as the Nucleophile; for NAALADase activity. Glu425 serves as a coordination point for Zn(2+). The Ca(2+) site is built by Glu433 and Glu436. Residue Asp453 coordinates Zn(2+). 2 N-linked (GlcNAc...) asparagine glycosylation sites follow: Asn459 and Asn476. Residues Ser517–Gly518, Asn519, Arg534–Arg536, Tyr552, and Tyr552–His553 contribute to the substrate site. His553 contributes to the Zn(2+) binding site. The Charge relay system role is filled by Ser628. N-linked (GlcNAc...) asparagine glycosylation is present at Asn638. Catalysis depends on charge relay system residues Asp666 and His689. Lys699–Tyr700 is a substrate binding site.

Belongs to the peptidase M28 family. M28B subfamily. Homodimer. The cofactor is Zn(2+). In terms of processing, the first two amino acids at the N-terminus of isoform PSMA' appear to be cleaved by limited proteolysis. The N-terminus is blocked. In terms of tissue distribution, highly expressed in prostate epithelium. Detected in urinary bladder, kidney, testis, ovary, fallopian tube, breast, adrenal gland, liver, esophagus, stomach, small intestine, colon and brain (at protein level). Detected in the small intestine, brain, kidney, liver, spleen, colon, trachea, spinal cord and the capillary endothelium of a variety of tumors. Expressed specifically in jejunum brush border membranes. In the brain, highly expressed in the ventral striatum and brain stem. Also expressed in fetal liver and kidney. Isoform PSMA' is the most abundant form in normal prostate. Isoform PSMA-1 is the most abundant form in primary prostate tumors. Isoform PSMA-9 is specifically expressed in prostate cancer.

It localises to the cell membrane. Its subcellular location is the cytoplasm. It catalyses the reaction Release of an unsubstituted, C-terminal glutamyl residue, typically from Ac-Asp-Glu or folylpoly-gamma-glutamates.. The NAALADase activity is inhibited by beta-NAAG, quisqualic acid, 2-(phosphonomethyl) pentanedioic acid (PMPA) and EDTA. Activated by cobalt. Its function is as follows. Has both folate hydrolase and N-acetylated-alpha-linked-acidic dipeptidase (NAALADase) activity. Has a preference for tri-alpha-glutamate peptides. In the intestine, required for the uptake of folate. In the brain, modulates excitatory neurotransmission through the hydrolysis of the neuropeptide, N-aceylaspartylglutamate (NAAG), thereby releasing glutamate. Involved in prostate tumor progression. In terms of biological role, also exhibits a dipeptidyl-peptidase IV type activity. In vitro, cleaves Gly-Pro-AMC. In Homo sapiens (Human), this protein is Glutamate carboxypeptidase 2.